Consider the following 170-residue polypeptide: uncharacterized protein (170 aa).

Residues 1 to 28 (MTGGVMSQKFVVGAGLLVCSVCSLSAMA) form the signal peptide.

Belongs to the fimbrial protein family.

In terms of biological role, part of the yfcOPQRSUV fimbrial operon. Could contribute to adhesion to various surfaces in specific environmental niches. Increases adhesion to eukaryotic T24 bladder epithelial cells in the absence of fim genes. This is an uncharacterized protein from Escherichia coli (strain K12).